The chain runs to 152 residues: Ribosomal RNA large subunit methyltransferase H (152 aa).

S-adenosyl-L-methionine contacts are provided by residues Leu68, Gly100, and Phe119–Trp124.

Belongs to the RNA methyltransferase RlmH family. Homodimer.

The protein localises to the cytoplasm. The enzyme catalyses pseudouridine(1915) in 23S rRNA + S-adenosyl-L-methionine = N(3)-methylpseudouridine(1915) in 23S rRNA + S-adenosyl-L-homocysteine + H(+). In terms of biological role, specifically methylates the pseudouridine at position 1915 (m3Psi1915) in 23S rRNA. The polypeptide is Ribosomal RNA large subunit methyltransferase H (Paramagnetospirillum magneticum (strain ATCC 700264 / AMB-1) (Magnetospirillum magneticum)).